Here is a 217-residue protein sequence, read N- to C-terminus: MISSVAPPPEKMLFQLSLRRRGISDRGVLQAMESVPRDRFVDAVHRDSAWRDTALPIACGQTISQPFVVAYMTEQLHLQPGHRVLEIGTGSGYHAAVLSRLVRDVVSVERFKTLADRARARLKELNYANVEVVLGDGFALPEGQGTFDRILVTAAMAELPQPLLDLLDPDGILIAPIGPGNGRQTLIRVQRKDDGFLRKPLVDVRFVPALPGIAREL.

Ser64 is an active-site residue.

Belongs to the methyltransferase superfamily. L-isoaspartyl/D-aspartyl protein methyltransferase family.

The protein localises to the cytoplasm. The enzyme catalyses [protein]-L-isoaspartate + S-adenosyl-L-methionine = [protein]-L-isoaspartate alpha-methyl ester + S-adenosyl-L-homocysteine. In terms of biological role, catalyzes the methyl esterification of L-isoaspartyl residues in peptides and proteins that result from spontaneous decomposition of normal L-aspartyl and L-asparaginyl residues. It plays a role in the repair and/or degradation of damaged proteins. The sequence is that of Protein-L-isoaspartate O-methyltransferase 2 from Rhodopseudomonas palustris (strain HaA2).